Here is a 151-residue protein sequence, read N- to C-terminus: Lipoprotein signal peptidase (151 aa).

Helical transmembrane passes span 61–81 (GSQWLGWISLLVSVGLLIWIG) and 88–107 (SRWQAAAAAFLLAGSVGNGI). Residues aspartate 117 and aspartate 133 contribute to the active site. A helical transmembrane segment spans residues 128 to 148 (VFNLADVAINLAVLCLLIEAI).

Belongs to the peptidase A8 family.

The protein localises to the cell inner membrane. The enzyme catalyses Release of signal peptides from bacterial membrane prolipoproteins. Hydrolyzes -Xaa-Yaa-Zaa-|-(S,diacylglyceryl)Cys-, in which Xaa is hydrophobic (preferably Leu), and Yaa (Ala or Ser) and Zaa (Gly or Ala) have small, neutral side chains.. It participates in protein modification; lipoprotein biosynthesis (signal peptide cleavage). In terms of biological role, this protein specifically catalyzes the removal of signal peptides from prolipoproteins. This chain is Lipoprotein signal peptidase, found in Synechococcus sp. (strain RCC307).